The sequence spans 147 residues: Bis(5'-nucleosyl)-tetraphosphatase [asymmetrical] (147 aa).

One can recognise a Nudix hydrolase domain in the interval 1-139 (MALRACGLII…EMKAALQEGH (139 aa)). Residue Ala2 is modified to N-acetylalanine. The Nudix box motif lies at 43–64 (GHVEPGEDDLETALRETQEEAG).

The protein belongs to the Nudix hydrolase family. The cofactor is a divalent metal cation.

The catalysed reaction is P(1),P(4)-bis(5'-guanosyl) tetraphosphate + H2O = GMP + GTP + 2 H(+). It carries out the reaction a 5'-end CoA-ribonucleoside in mRNA + H2O = a 5'-end phospho-adenosine-phospho-ribonucleoside in mRNA + (R)-4'-phosphopantetheine + 2 H(+). The enzyme catalyses a 5'-end FAD-phospho-ribonucleoside in mRNA + H2O = a 5'-end phospho-adenosine-phospho-ribonucleoside in mRNA + FMN + 2 H(+). In terms of biological role, catalyzes the asymmetric hydrolysis of diadenosine 5',5'''-P1,P4-tetraphosphate (Ap4A) to yield AMP and ATP. Exhibits decapping activity towards FAD-capped RNAs and dpCoA-capped RNAs in vitro. The polypeptide is Bis(5'-nucleosyl)-tetraphosphatase [asymmetrical] (NUDT2) (Homo sapiens (Human)).